The following is a 79-amino-acid chain: U-scoloptoxin(15)-Sm1a (79 aa).

The signal sequence occupies residues 1-25 (MKMNVVVLSVVVLLLFIANIQQTEA).

It belongs to the scoloptoxin-15 family. Post-translationally, contains 2 disulfide bonds. In terms of tissue distribution, expressed by the venom gland.

It localises to the secreted. This chain is U-scoloptoxin(15)-Sm1a, found in Scolopendra morsitans (Tanzanian blue ringleg centipede).